Consider the following 261-residue polypeptide: uncharacterized protein (261 aa).

Helical transmembrane passes span 15 to 35 (WYSV…IIVC), 87 to 107 (VYLI…IRNA), and 131 to 151 (LLLY…YFLI). Residues 234–246 (LEEKKAKRRQNAE) show a composition bias toward basic and acidic residues. The interval 234-261 (LEEKKAKRRQNAERRKKRREIAMEQREQ) is disordered.

The protein resides in the membrane. This is an uncharacterized protein from Caenorhabditis elegans.